Consider the following 119-residue polypeptide: Ribonuclease P protein component (119 aa).

Belongs to the RnpA family. As to quaternary structure, consists of a catalytic RNA component (M1 or rnpB) and a protein subunit.

It carries out the reaction Endonucleolytic cleavage of RNA, removing 5'-extranucleotides from tRNA precursor.. In terms of biological role, RNaseP catalyzes the removal of the 5'-leader sequence from pre-tRNA to produce the mature 5'-terminus. It can also cleave other RNA substrates such as 4.5S RNA. The protein component plays an auxiliary but essential role in vivo by binding to the 5'-leader sequence and broadening the substrate specificity of the ribozyme. The protein is Ribonuclease P protein component of Salmonella arizonae (strain ATCC BAA-731 / CDC346-86 / RSK2980).